The sequence spans 462 residues: Dipeptidyl peptidase 1 (462 aa).

A signal peptide spans 1-24 (MGPWTHSLRAVLLLVLLGVCTVRS). N29 and N53 each carry an N-linked (GlcNAc...) asparagine glycan. Cystine bridges form between C30–C118, C54–C136, C254–C297, C290–C330, and C320–C336. The propeptide occupies 135–230 (ACFVGKKVES…DEIQQQILNL (96 aa)). Residue C257 is part of the active site. N-linked (GlcNAc...) asparagine glycosylation is present at N275. Chloride is bound by residues F301 and Y303. Position 346 (Y346) interacts with chloride. Active-site residues include H404 and N426.

It belongs to the peptidase C1 family. As to quaternary structure, tetramer of heterotrimers consisting of exclusion domain, heavy- and light chains. Requires chloride as cofactor. Broadly distributed, but higher levels found in lung, liver, kidney and spleen. Lower levels found in testis and brain.

It is found in the lysosome. It carries out the reaction Release of an N-terminal dipeptide, Xaa-Yaa-|-Zaa-, except when Xaa is Arg or Lys, or Yaa or Zaa is Pro.. Its function is as follows. Thiol protease. Has dipeptidylpeptidase activity. Active against a broad range of dipeptide substrates composed of both polar and hydrophobic amino acids. Proline cannot occupy the P1 position and arginine cannot occupy the P2 position of the substrate. Can act as both an exopeptidase and endopeptidase. Activates serine proteases such as elastase, cathepsin G and granzymes A and B. This Mus musculus (Mouse) protein is Dipeptidyl peptidase 1 (Ctsc).